The sequence spans 459 residues: MAKVWSKRFDNALDPFIEKFNASIGFDRKLILEDLDCSIAHAKMLGKTQVLTSSESSQIINGLELIKVEYLEGKFSPGLPSEDIHYSIEEKLISLIGETGKKLHTGRSRNDQVGTDIRLWLRKEIDKIEILITDLQKSFFNIAKSNIYTLIPGYTHMQRAQPLSLAHHLLAYIEMLQRDRERFKEVRARVNISPLGAAALAGTKIKIDRQFTASELGFEKIYKNSIDAVSDRDFCIEFVSASALSMSHLSKISEEIILWVTDEFSFAKLTDKCATGSSLMPQKKNPDVPELIRGKTGRVYGHLQALLTMVKGVPLSYNKDFQEDKEPIFDTAETISSCMKAMTILINEGIEFNIKNLSDSVENDFSNATDLADYLVGKDVPFRTAYQVVGEIVKYCLKRKMLFKNLKIGEFKKFHPEFDEDVFSDLKPHNVVKSRNSEGGTGFVQVEKELNHWQKKLLL.

This sequence belongs to the lyase 1 family. Argininosuccinate lyase subfamily.

It is found in the cytoplasm. It catalyses the reaction 2-(N(omega)-L-arginino)succinate = fumarate + L-arginine. The protein operates within amino-acid biosynthesis; L-arginine biosynthesis; L-arginine from L-ornithine and carbamoyl phosphate: step 3/3. This chain is Argininosuccinate lyase, found in Prochlorococcus marinus (strain MIT 9215).